We begin with the raw amino-acid sequence, 105 residues long: Large ribosomal subunit protein uL24 (105 aa).

The protein belongs to the universal ribosomal protein uL24 family. As to quaternary structure, part of the 50S ribosomal subunit.

One of two assembly initiator proteins, it binds directly to the 5'-end of the 23S rRNA, where it nucleates assembly of the 50S subunit. Functionally, one of the proteins that surrounds the polypeptide exit tunnel on the outside of the subunit. The chain is Large ribosomal subunit protein uL24 from Marinomonas sp. (strain MWYL1).